Consider the following 490-residue polypeptide: Glutamate--tRNA ligase (490 aa).

The 'HIGH' region motif lies at 13 to 23; the sequence is PSPTGTPHVGL. A 'KMSKS' region motif is present at residues 257 to 261; it reads KLSKR. Lysine 260 contributes to the ATP binding site.

Belongs to the class-I aminoacyl-tRNA synthetase family. Glutamate--tRNA ligase type 1 subfamily. In terms of assembly, monomer.

It is found in the cytoplasm. It carries out the reaction tRNA(Glu) + L-glutamate + ATP = L-glutamyl-tRNA(Glu) + AMP + diphosphate. Functionally, catalyzes the attachment of glutamate to tRNA(Glu) in a two-step reaction: glutamate is first activated by ATP to form Glu-AMP and then transferred to the acceptor end of tRNA(Glu). This is Glutamate--tRNA ligase from Mycobacterium bovis (strain BCG / Pasteur 1173P2).